The sequence spans 133 residues: MDLEYQKKLAAKVAGVGLDRVRINPEKIDLVSEAVTRADIRRLIRSGAIEILQKRGISGARKKPRRKGPGSRKGGKYSKLPRKRRWIRKIRALRRELRRMKEQGLIDSKEYRELYAKLSSFNSVSQLRAHVGR.

The tract at residues 55–83 (RGISGARKKPRRKGPGSRKGGKYSKLPRK) is disordered. Positions 60–83 (ARKKPRRKGPGSRKGGKYSKLPRK) are enriched in basic residues.

It belongs to the eukaryotic ribosomal protein eL19 family. As to quaternary structure, part of the 50S ribosomal subunit.

Binds to the 23S rRNA. The sequence is that of Large ribosomal subunit protein eL19 from Korarchaeum cryptofilum (strain OPF8).